Here is a 444-residue protein sequence, read N- to C-terminus: Glutamyl-tRNA reductase (444 aa).

Residues 49-52 (TCNR), Ser-109, 114-116 (ETQ), and Gln-120 each bind substrate. The active-site Nucleophile is Cys-50. Residue 189 to 194 (GAGKMS) participates in NADP(+) binding. A disordered region spans residues 425–444 (KPKKQPAPAGIKEPVLAKKG).

This sequence belongs to the glutamyl-tRNA reductase family. In terms of assembly, homodimer.

The enzyme catalyses (S)-4-amino-5-oxopentanoate + tRNA(Glu) + NADP(+) = L-glutamyl-tRNA(Glu) + NADPH + H(+). It functions in the pathway porphyrin-containing compound metabolism; protoporphyrin-IX biosynthesis; 5-aminolevulinate from L-glutamyl-tRNA(Glu): step 1/2. Catalyzes the NADPH-dependent reduction of glutamyl-tRNA(Glu) to glutamate 1-semialdehyde (GSA). This chain is Glutamyl-tRNA reductase, found in Pelotomaculum thermopropionicum (strain DSM 13744 / JCM 10971 / SI).